The sequence spans 182 residues: Nucleoside triphosphate/diphosphate phosphatase (182 aa).

Arginine 27 acts as the Proton donor in catalysis. Mg(2+) is bound by residues asparagine 91, aspartate 107, aspartate 109, aspartate 111, aspartate 124, and glutamate 127.

It belongs to the Ntdp family. The cofactor is Mg(2+).

The enzyme catalyses a ribonucleoside 5'-triphosphate + H2O = a ribonucleoside 5'-diphosphate + phosphate + H(+). It carries out the reaction a ribonucleoside 5'-diphosphate + H2O = a ribonucleoside 5'-phosphate + phosphate + H(+). In terms of biological role, has nucleoside phosphatase activity towards nucleoside triphosphates and nucleoside diphosphates. The protein is Nucleoside triphosphate/diphosphate phosphatase of Lactiplantibacillus plantarum (strain ATCC BAA-793 / NCIMB 8826 / WCFS1) (Lactobacillus plantarum).